Consider the following 483-residue polypeptide: Essential nuclear protein 1 (483 aa).

4 disordered regions span residues 1 to 21, 33 to 55, 67 to 123, and 171 to 200; these read MARA…LKDL, KKKL…GYID, KEQQ…EGDY, and ESQV…GLKS. The span at 96–123 shows a compositional bias: acidic residues; that stretch reads YDDEDEDEDEDEEAFGEDISDFEPEGDY. A Phosphoserine; by ATM or ATR modification is found at Ser172. The span at 174-183 shows a compositional bias: acidic residues; sequence VEDMQDDEPL. Positions 185–198 are enriched in polar residues; that stretch reads NEQNTSRGNISSGL. Ser190 and Ser404 each carry phosphoserine.

This sequence belongs to the bystin family.

Its subcellular location is the cytoplasm. The protein resides in the nucleus. It localises to the nucleolus. Its function is as follows. Required for normal export of the pre-40S particles from the nucleus to the cytoplasm. Its subcellular location and association with pre-40S subunit shifts from mixed cytoplasm/nucleus to all nuclear in RPS19 disruptions, suggesting it acts after the ribosomal protein. This is Essential nuclear protein 1 (ENP1) from Saccharomyces cerevisiae (strain ATCC 204508 / S288c) (Baker's yeast).